A 250-amino-acid polypeptide reads, in one-letter code: UPF0758 protein tlr1707 (250 aa).

Residues 116–239 (TIIDSPALAA…YQSLREITPL (124 aa)) enclose the MPN domain. Zn(2+) contacts are provided by H188, H190, and D201. The JAMM motif signature appears at 188–201 (HNHPSGNLSPSQAD).

It belongs to the UPF0758 family.

The chain is UPF0758 protein tlr1707 from Thermosynechococcus vestitus (strain NIES-2133 / IAM M-273 / BP-1).